A 756-amino-acid polypeptide reads, in one-letter code: Cartilage oligomeric matrix protein (756 aa).

Residues M1–G20 form the signal peptide. Residues G22–R85 are COMP N-terminal. The 40-residue stretch at P86 to A125 folds into the EGF-like 1 domain. 10 disulfide bridges follow: C90-C101, C95-C110, C113-C124, C130-C141, C135-C150, C183-C196, C190-C205, C228-C242, C236-C252, and C254-C265. N120 is a glycosylation site (N-linked (GlcNAc...) asparagine). In terms of domain architecture, EGF-like 2; calcium-binding spans D126–T178. The 40-residue stretch at D179–S218 folds into the EGF-like 3; calcium-binding domain. One can recognise an EGF-like 4 domain in the interval P224–G266. TSP type-3 repeat units follow at residues R267–Q299, E300–Q335, R336–Q358, K359–Q394, K395–Q417, R418–Q455, Q456–Q491, and E492–L527. The interval N322 to A502 is disordered. Composition is skewed to basic and acidic residues over residues P333–D345, R351–A369, and A415–V425. A Cell attachment site motif is present at residues R366–D368. Residues A466–G475 are compositionally biased toward acidic residues. The interval T526–A756 is mediates cell survival and induction of the IAP family of survival proteins. The TSP C-terminal domain occupies R531 to P745. A glycan (N-linked (GlcNAc...) asparagine) is linked at N741.

The protein belongs to the thrombospondin family. In terms of assembly, pentamer; disulfide-linked. Exists in a more compact conformation in the presence of calcium and shows a more extended conformation in the absence of calcium. Interacts with ITGB3, ITGA5 and FN1. Binding to FN1 requires the presence of divalent cations (Ca(2+), Mg(2+) or Mn(2+)). The greatest amount of binding is seen in the presence of Mn(2+). Interacts with MATN1, MATN3, MATN4 and ACAN. Binds heparin, heparan sulfate and chondroitin sulfate. EDTA dimishes significantly its binding to ACAN and abolishes its binding to MATN3, MATN4 and chondroitin sulfate. Interacts with collagen I, II and IX, and interaction with these collagens is dependent on the presence of zinc ions. Interacts with ADAMTS12. Interacts with ITGA7. Ca(2+) serves as cofactor. Post-translationally, proteolytically cleaved by metalloproteases ADAMTS4 and ADAMTS1 with ADAMTS4 showing more potent activity.

It is found in the secreted. The protein resides in the extracellular space. It localises to the extracellular matrix. Its function is as follows. Plays a role in the structural integrity of cartilage via its interaction with other extracellular matrix proteins such as the collagens and fibronectin. Can mediate the interaction of chondrocytes with the cartilage extracellular matrix through interaction with cell surface integrin receptors. Could play a role in the pathogenesis of osteoarthritis. Potent suppressor of apoptosis in both primary chondrocytes and transformed cells. Suppresses apoptosis by blocking the activation of caspase-3 and by inducing the IAP family of survival proteins (BIRC3, BIRC2, BIRC5 and XIAP). Essential for maintaining a vascular smooth muscle cells (VSMCs) contractile/differentiated phenotype under physiological and pathological stimuli. Maintains this phenotype of VSMCs by interacting with ITGA7. In Bos taurus (Bovine), this protein is Cartilage oligomeric matrix protein (COMP).